A 341-amino-acid polypeptide reads, in one-letter code: 2-keto-4-carboxy-3-hexenedioate hydratase (341 aa).

Zn(2+) contacts are provided by H8 and H10. 71-73 (RAS) serves as a coordination point for substrate. Residue H178 participates in Zn(2+) binding. Y194 and H223 together coordinate substrate. Residue E284 is the Proton donor/acceptor of the active site. R290 serves as a coordination point for substrate.

This sequence belongs to the metallo-dependent hydrolases superfamily. As to quaternary structure, homodimer. Zn(2+) is required as a cofactor.

It catalyses the reaction (3Z)-2-oxo-4-carboxy-3-hexenedioate + H2O = (2S)-2-hydroxy-4-oxobutane-1,2,4-tricarboxylate. The protein operates within secondary metabolite metabolism; lignin degradation. Contributes to the degradation of lignin at the level of the protocatechuate 4,5-cleavage pathway. Catalyzes the hydration of the double bond of (3Z)-2-keto-4-carboxy-3-hexenedioate (KCH) to (4S)-4-carboxy-4-hydroxy-2-oxoadipate (CHA, also named (2S)-2-hydroxy-4-oxobutane-1,2,4-tricarboxylate). Is involved in the catabolism of both vanillate and syringate. The protein is 2-keto-4-carboxy-3-hexenedioate hydratase of Sphingobium sp. (strain NBRC 103272 / SYK-6).